Here is a 307-residue protein sequence, read N- to C-terminus: Taste receptor type 2 member 41 (307 aa).

Residues 1–7 (MQAALTA) are Extracellular-facing. A helical transmembrane segment spans residues 8–28 (FFMLLFSLLSLLGIAANGFIV). Residues 29 to 40 (LVLGREWLRYGR) lie on the Cytoplasmic side of the membrane. A helical membrane pass occupies residues 41–61 (LLPLDMILISLGASRFCLQLV). The Extracellular segment spans residues 62–88 (GTVHNFYYSAQKVEYSGGLGRQFFHLH). The chain crosses the membrane as a helical span at residues 89–109 (WHFLNSATFWFCSWLSVLFCV). Residues 110–129 (KIANITHPTFLWLKWRFPGW) lie on the Cytoplasmic side of the membrane. The helical transmembrane segment at 130 to 150 (VPWLLLGSVLISFIITLLFFW) threads the bilayer. Residues 151–183 (VNYPAYQEFLIRKFSVNMTYKWNTRIETYYFPS) are Extracellular-facing. An N-linked (GlcNAc...) asparagine glycan is attached at Asn167. The helical transmembrane segment at 184 to 204 (LKLVIWSIPFSVFLVSIMLLI) threads the bilayer. Over 205–234 (NSLRRHTQRMQHNGHSLQDPSTQAHTRALK) the chain is Cytoplasmic. The chain crosses the membrane as a helical span at residues 235-255 (SLISFLILYALSFLSLIIDAT). Residues 256–264 (KFISMQNDF) lie on the Extracellular side of the membrane. A helical transmembrane segment spans residues 265–285 (YWPWQIAVYLCISVHPFILIF). The Cytoplasmic segment spans residues 286-307 (SNLKLRSVFSQLLLLARGFWVA).

It belongs to the G-protein coupled receptor T2R family.

Its subcellular location is the membrane. Its function is as follows. Receptor that may play a role in the perception of bitterness and is gustducin-linked. May play a role in sensing the chemical composition of the gastrointestinal content. The activity of this receptor may stimulate alpha gustducin, mediate PLC-beta-2 activation and lead to the gating of TRPM5. In Pan troglodytes (Chimpanzee), this protein is Taste receptor type 2 member 41 (TAS2R41).